Consider the following 43-residue polypeptide: DRDSCVDKSRCGKYGYYGQCDDCCKKAGDRAGTCVYYKCKCNP.

Cystine bridges form between Cys5–Cys23, Cys11–Cys34, Cys20–Cys39, and Cys24–Cys41.

Belongs to the ergtoxin family. Gamma-KTx 4 subfamily. As to expression, expressed by the venom gland.

The protein resides in the secreted. Reversibly blocks Kv11/ERG potassium channels. This Centruroides sculpturatus (Arizona bark scorpion) protein is Potassium channel toxin gamma-KTx 4.9.